Consider the following 1551-residue polypeptide: Dual oxidase 1 (1551 aa).

Positions 1-21 are cleaved as a signal peptide; the sequence is MAVYSAVAWILLFGVLASLGA. The Extracellular portion of the chain corresponds to 22-596; sequence QNPVSWEVQR…YFKGSGFGFG (575 aa). The interval 26 to 593 is peroxidase-like; mediates peroxidase activity; sequence SWEVQRFDGW…VRDYFKGSGF (568 aa). Residues N94, N342, N354, N461, and N534 are each glycosylated (N-linked (GlcNAc...) asparagine). Residues 597–617 form a helical membrane-spanning segment; sequence LTIGTLCCFPLVSLLSAWIVA. Residues 618 to 1044 are Cytoplasmic-facing; sequence RLRMRNFKRL…KRFIENYRRH (427 aa). EF-hand domains lie at 815 to 850, 851 to 886, and 895 to 930; these read PQDM…FMKG, SPEE…FIEI, and QLAE…HDSD. Ca(2+)-binding residues include D828, D830, N832, Y834, E839, D864, D866, N868, and E875. An interaction with TXNDC11 region spans residues 956–1248; it reads YISQEKICPS…GSFALIQMPR (293 aa). The helical transmembrane segment at 1045-1065 threads the bilayer; that stretch reads IGCVAVFYTITGALFLERAYY. The Extracellular portion of the chain corresponds to 1066–1080; sequence YAFAAHHSGITDTTR. A helical membrane pass occupies residues 1081–1101; the sequence is VGIILSRGTAASISFMFSYIL. The Ferric oxidoreductase domain occupies 1087–1269; it reads RGTAASISFM…YVGDKLVSLS (183 aa). The Cytoplasmic segment spans residues 1102-1136; it reads LTMCRNLITFLRETFLNRYIPFDAAVDFHRFIAST. A helical transmembrane segment spans residues 1137-1157; sequence AIILTVLHSAGHVVNVYLFSI. The Extracellular segment spans residues 1158–1188; it reads SPLSVLSCLFPDLFHDDGSEFPQKYYWWFFQ. Residues 1189 to 1209 traverse the membrane as a helical segment; the sequence is TVPGLTGVLLLLALAIMYVFA. Residues 1210–1226 are Cytoplasmic-facing; sequence SHHFRRRSFRGFWLTHH. The helical transmembrane segment at 1227–1247 threads the bilayer; that stretch reads LYIFLYILLIIHGSFALIQMP. R1248 is a topological domain (extracellular). The chain crosses the membrane as a helical span at residues 1249 to 1269; sequence FHIFFLVPAIIYVGDKLVSLS. Residues 1270–1376 form the FAD-binding FR-type domain; the sequence is RKKVEISVVK…DGPFGEGHQE (107 aa). Topologically, residues 1270–1551 are cytoplasmic; the sequence is RKKVEISVVK…THFSHHYENF (282 aa).

This sequence in the N-terminal section; belongs to the peroxidase family. In terms of assembly, interacts with TXNDC11, TPO and CYBA. N-glycosylated. In terms of tissue distribution, expressed in thyrocytes (at protein level).

It localises to the apical cell membrane. The enzyme catalyses NADH + O2 + H(+) = H2O2 + NAD(+). It catalyses the reaction NADPH + O2 + H(+) = H2O2 + NADP(+). It functions in the pathway hormone biosynthesis; thyroid hormone biosynthesis. The NADPH oxidase activity is calcium-dependent. Peroxidase activity is inhibited by aminobenzohydrazide. Generates hydrogen peroxide which is required for the activity of thyroid peroxidase/TPO and lactoperoxidase/LPO. Plays a role in thyroid hormones synthesis and lactoperoxidase-mediated antimicrobial defense at the surface of mucosa. May have its own peroxidase activity through its N-terminal peroxidase-like domain. This chain is Dual oxidase 1 (Duox1), found in Rattus norvegicus (Rat).